Here is a 151-residue protein sequence, read N- to C-terminus: UPF0178 protein PFLU_5917 (151 aa).

Belongs to the UPF0178 family.

This chain is UPF0178 protein PFLU_5917, found in Pseudomonas fluorescens (strain SBW25).